Consider the following 206-residue polypeptide: LexA repressor (206 aa).

Positions 28–48 (VREICAAVGLSSTSTVHGHLT) form a DNA-binding region, H-T-H motif. Residues S127 and K165 each act as for autocatalytic cleavage activity in the active site.

It belongs to the peptidase S24 family. Homodimer.

The enzyme catalyses Hydrolysis of Ala-|-Gly bond in repressor LexA.. Functionally, represses a number of genes involved in the response to DNA damage (SOS response), including recA and lexA. In the presence of single-stranded DNA, RecA interacts with LexA causing an autocatalytic cleavage which disrupts the DNA-binding part of LexA, leading to derepression of the SOS regulon and eventually DNA repair. The sequence is that of LexA repressor from Lactobacillus delbrueckii subsp. bulgaricus (strain ATCC 11842 / DSM 20081 / BCRC 10696 / JCM 1002 / NBRC 13953 / NCIMB 11778 / NCTC 12712 / WDCM 00102 / Lb 14).